The following is a 455-amino-acid chain: Neuronal acetylcholine receptor subunit beta-3 (455 aa).

Positions M1 to G20 are cleaved as a signal peptide. Residues S21–L229 are Extracellular-facing. 2 N-linked (GlcNAc...) asparagine glycosylation sites follow: N48 and N163. A disulfide bridge connects residues C150 and C164. 3 helical membrane passes run P230–L254, L262–I279, and Y296–V317. The Cytoplasmic portion of the chain corresponds to H318–R425. The helical transmembrane segment at I426–T444 threads the bilayer.

Belongs to the ligand-gated ion channel (TC 1.A.9) family. Acetylcholine receptor (TC 1.A.9.1) subfamily. Beta-3/CHRNB3 sub-subfamily. In terms of assembly, neuronal AChR seems to be composed of two different type of subunits: alpha and beta. CHRNB3/beta-3 subunit is only able to form functional nAChRs when co-assembled with another beta subunit. Participates in pentameric assemblies along with CHRNA4/alpha-4 and CHRNB2/beta-2 subunits and with CHRNA6/alpha-6 as well, forming stoichiometries such as (CHRNA3:CHRNB4)2:CHRNB3, (CHRNA4:CHRNB2)2:CHRNB3 or (CHRNA6:CHRNB2)2:CHRNB3. Relatively abundant in the developing retina and in the trigeminal ganglion.

Its subcellular location is the synaptic cell membrane. The protein localises to the cell membrane. It catalyses the reaction Ca(2+)(in) = Ca(2+)(out). The catalysed reaction is K(+)(in) = K(+)(out). The enzyme catalyses Na(+)(in) = Na(+)(out). With respect to regulation, activated by a myriad of ligands such as acetylcholine, cytisine, nicotine, choline and epibatidine. In terms of biological role, component of neuronal acetylcholine receptors (nAChRs) that function as pentameric, ligand-gated cation channels with high calcium permeability among other activities. nAChRs are excitatory neurotrasnmitter receptors formed by a collection of nAChR subunits known to mediate synaptic transmission in the nervous system and the neuromuscular junction. Each nAchR subunit confers differential attributes to channel properties, including activation, deactivation and desensitization kinetics, pH sensitivity, cation permeability, and binding to allosteric modulators. Has an accessory rather than functional role and is only able to form functional nAChRs when co-assembled with another beta subunit. Participates in pentameric assemblies along with CHRNA3, CHRNA4, CHRNA6, CHRNB2 and CHRNB4. Modulates receptor assembly and increases receptor sensitivity to nicotine when associated with CHRNB2, CHRNA4 and/or CHRNA6 as well as CHRNA3 and CHRNB4. Seems to play a role in nicotine addiction. The protein is Neuronal acetylcholine receptor subunit beta-3 (CHRNB3) of Gallus gallus (Chicken).